The following is a 671-amino-acid chain: Probable ATP-dependent RNA helicase ddx41 (671 aa).

Coiled-coil stretches lie at residues 19–43 (IPLKERKLNQIKSKLNNLKQQQPQQ) and 100–154 (LDQK…DMEE). Composition is skewed to low complexity over residues 33-83 (LNNL…NNDN) and 125-139 (IENDVNSSNNNNNNG). Disordered regions lie at residues 33–88 (LNNL…FEDE) and 125–148 (IENDVNSSNNNNNNGEENKIKEEK). The Q motif motif lies at 222–250 (TTFKEMKIPKPVIDVLLEKGIKKPSPIQV). A Helicase ATP-binding domain is found at 253–438 (LPVILSGRDM…RSALVLPVEV (186 aa)). 266–273 (AYTGSGKT) serves as a coordination point for ATP. Positions 386–389 (DEAD) match the DEAD box motif. The Helicase C-terminal domain maps to 449-609 (NVTQEVEFVK…KVPPALLEIP (161 aa)). The segment at 617–636 (KLQDRNGNTGGGADDDDTKP) is disordered. The segment at 635–652 (KPCEYCDGRGHRLVNCPK) adopts a CCHC-type zinc-finger fold.

It belongs to the DEAD box helicase family. DDX41 subfamily.

The protein resides in the nucleus. The catalysed reaction is ATP + H2O = ADP + phosphate + H(+). In Dictyostelium discoideum (Social amoeba), this protein is Probable ATP-dependent RNA helicase ddx41 (ddx41).